Reading from the N-terminus, the 815-residue chain is Probable bifunctional folylpolyglutamate synthase/dihydropteroate synthase (815 aa).

The folylpolyglutamate synthase stretch occupies residues 1 to 416; it reads MRYDEAANFL…LVAGSLFAVA (416 aa). 47–53 contacts ATP; it reads GSNGKGS. The 251-residue stretch at 553–803 folds into the Pterin-binding domain; the sequence is TAVMGILNVT…DVPENVAAVR (251 aa). The tract at residues 555–815 is DHPS; that stretch reads VMGILNVTPD…EATRTGADAE (261 aa). Mg(2+) is bound at residue asparagine 560. (7,8-dihydropterin-6-yl)methyl diphosphate-binding positions include threonine 600, aspartate 633, asparagine 652, aspartate 722, lysine 758, and 791–793; that span reads RVH.

It in the N-terminal section; belongs to the folylpolyglutamate synthase family. In the C-terminal section; belongs to the DHPS family. It depends on Mg(2+) as a cofactor.

The enzyme catalyses (6S)-5,6,7,8-tetrahydrofolyl-(gamma-L-Glu)(n) + L-glutamate + ATP = (6S)-5,6,7,8-tetrahydrofolyl-(gamma-L-Glu)(n+1) + ADP + phosphate + H(+). It catalyses the reaction (7,8-dihydropterin-6-yl)methyl diphosphate + 4-aminobenzoate = 7,8-dihydropteroate + diphosphate. Its pathway is cofactor biosynthesis; tetrahydrofolylpolyglutamate biosynthesis. It functions in the pathway cofactor biosynthesis; tetrahydrofolate biosynthesis; 7,8-dihydrofolate from 2-amino-4-hydroxy-6-hydroxymethyl-7,8-dihydropteridine diphosphate and 4-aminobenzoate: step 1/2. Can complement an H.volcanii mutant strain that is thymidine auxotroph because it lacks the two dihydrofolate reductase genes encoded by hdrA and hdrB. This chain is Probable bifunctional folylpolyglutamate synthase/dihydropteroate synthase (folP), found in Halobacterium salinarum (strain ATCC 700922 / JCM 11081 / NRC-1) (Halobacterium halobium).